A 450-amino-acid chain; its full sequence is Bifunctional apoptosis regulator (450 aa).

The interval 1-20 (MEEPQKSYVNTMDLERDEPL) is disordered. Residues 1 to 140 (MEEPQKSYVN…PNTGRANQQM (140 aa)) lie on the Cytoplasmic side of the membrane. Residues 34-74 (CHCCYDILVNPTTLNCGHSFCRHCLALWWASSKKTECPECR) form an RING-type zinc finger. The chain crosses the membrane as a helical span at residues 141–161 (GGGFFSGVLTALTGVAVVLLV). At 162–331 (YHWSSRESEH…KEPTWKQWRE (170 aa)) the chain is on the lumenal side. The SAM domain occupies 182 to 249 (WTAEEVVLWL…LMELERVKAL (68 aa)). A glycan (N-linked (GlcNAc...) asparagine) is linked at asparagine 232. Residues 332–352 (FLVKYSFLPYQLIAEFAWDWL) traverse the membrane as a helical segment. Residues 353–360 (EVHYWTSR) lie on the Cytoplasmic side of the membrane. A helical transmembrane segment spans residues 361 to 381 (FLIINAMLLSVLELFSFWRIW). Residues 382–404 (SRSELKTVPQRMWSHFWKVSTQG) are Lumenal-facing. The chain crosses the membrane as a helical span at residues 405 to 425 (LFVAMFWPLIPQFVCNCLFYW). Over 426-450 (ALYFNPIINIDLVVKELRRLETQVL) the chain is Cytoplasmic.

As to quaternary structure, interacts with CASP8, BCL2 and BCL2L1 through SAM domain and also with HIP1, IFT57, ESRRBL1 and BCAP31. Interacts with NGFR; this interaction inhibits NF-kappa-B and JNK-related signaling pathways. Mediates RING-dependent self-ubiquitination leading to proteasomal degradation. In terms of tissue distribution, expressed highly in brain, moderately in small intestine, weakly in testes and only faintly in liver and skeletal muscle. Not expressed in heart, kidney, lung and spleen.

It is found in the endoplasmic reticulum membrane. The catalysed reaction is S-ubiquitinyl-[E2 ubiquitin-conjugating enzyme]-L-cysteine + [acceptor protein]-L-lysine = [E2 ubiquitin-conjugating enzyme]-L-cysteine + N(6)-ubiquitinyl-[acceptor protein]-L-lysine.. Functionally, membrane-bound E3 ubiquitin ligase that plays a role in several processes including apoptosis regulation or reticulum endoplasmic stress. Has anti-apoptotic activity, both for apoptosis triggered via death-receptors and via mitochondrial factors. Contributes to the dynamic control of IRE1/ERN1 signaling during ER stress by inducing BAX inhibitor 1/TMBIM6 proteasomal degradation. Promotes the activation of TGF-beta signaling by mediating the 'Lys-63'-linked ubiquitination of TGFBR1 which is critical to activate the pathway. Together with NGFR, negatively regulates NF-kappa-B and JNK-related signaling pathways. Promotes the proteasome-mediated degradation of PNPLA3, a protein involveld in lipid metabolism. The protein is Bifunctional apoptosis regulator (BFAR) of Homo sapiens (Human).